Reading from the N-terminus, the 132-residue chain is D-ribose pyranase (132 aa).

His-20 acts as the Proton donor in catalysis. Substrate is bound by residues Asp-28, His-99, and 121 to 123; that span reads YSN.

Belongs to the RbsD / FucU family. RbsD subfamily. In terms of assembly, homodecamer.

Its subcellular location is the cytoplasm. It catalyses the reaction beta-D-ribopyranose = beta-D-ribofuranose. Its pathway is carbohydrate metabolism; D-ribose degradation; D-ribose 5-phosphate from beta-D-ribopyranose: step 1/2. Functionally, catalyzes the interconversion of beta-pyran and beta-furan forms of D-ribose. The protein is D-ribose pyranase of Pseudomonas putida (strain GB-1).